Here is a 245-residue protein sequence, read N- to C-terminus: tRNA pseudouridine synthase A (245 aa).

Aspartate 52 serves as the catalytic Nucleophile. A substrate-binding site is contributed by tyrosine 110.

Belongs to the tRNA pseudouridine synthase TruA family. As to quaternary structure, homodimer.

The catalysed reaction is uridine(38/39/40) in tRNA = pseudouridine(38/39/40) in tRNA. Formation of pseudouridine at positions 38, 39 and 40 in the anticodon stem and loop of transfer RNAs. This chain is tRNA pseudouridine synthase A, found in Borrelia duttonii (strain Ly).